The chain runs to 162 residues: NADH-quinone oxidoreductase subunit I 2 (162 aa).

4Fe-4S ferredoxin-type domains follow at residues 52 to 82 and 93 to 122; these read LRRYPNGEERCIACKLCEAICPAQAITIEAG and VRYDIDMVKCIYCGLCQEACPVDAIVEGPN. 8 residues coordinate [4Fe-4S] cluster: Cys-62, Cys-65, Cys-68, Cys-72, Cys-102, Cys-105, Cys-108, and Cys-112.

This sequence belongs to the complex I 23 kDa subunit family. In terms of assembly, NDH-1 is composed of 14 different subunits. Subunits NuoA, H, J, K, L, M, N constitute the membrane sector of the complex. It depends on [4Fe-4S] cluster as a cofactor.

The protein resides in the cell inner membrane. The catalysed reaction is a quinone + NADH + 5 H(+)(in) = a quinol + NAD(+) + 4 H(+)(out). Functionally, NDH-1 shuttles electrons from NADH, via FMN and iron-sulfur (Fe-S) centers, to quinones in the respiratory chain. The immediate electron acceptor for the enzyme in this species is believed to be ubiquinone. Couples the redox reaction to proton translocation (for every two electrons transferred, four hydrogen ions are translocated across the cytoplasmic membrane), and thus conserves the redox energy in a proton gradient. In Rhodopseudomonas palustris (strain BisB5), this protein is NADH-quinone oxidoreductase subunit I 2.